Reading from the N-terminus, the 103-residue chain is Large ribosomal subunit protein uL23 (103 aa).

This sequence belongs to the universal ribosomal protein uL23 family. As to quaternary structure, part of the 50S ribosomal subunit. Contacts protein L29, and trigger factor when it is bound to the ribosome.

One of the early assembly proteins it binds 23S rRNA. One of the proteins that surrounds the polypeptide exit tunnel on the outside of the ribosome. Forms the main docking site for trigger factor binding to the ribosome. The sequence is that of Large ribosomal subunit protein uL23 from Zymomonas mobilis subsp. mobilis (strain ATCC 31821 / ZM4 / CP4).